Consider the following 90-residue polypeptide: MQQDKHPDYRPVVFRDRGAGYAFLTRSTATSDQTIVWDDGETYPVVEVEISSESHPFYTGKARTVDSEGRVARFERRYGAGEGQDTGEAG.

It belongs to the bacterial ribosomal protein bL31 family. Type B subfamily. In terms of assembly, part of the 50S ribosomal subunit.

The chain is Large ribosomal subunit protein bL31B-1 from Streptomyces coelicolor (strain ATCC BAA-471 / A3(2) / M145).